The following is a 437-amino-acid chain: Trigger factor (437 aa).

A PPIase FKBP-type domain is found at 161–246; it reads GDRVNIDFKG…VNKVEGKALP (86 aa).

Belongs to the FKBP-type PPIase family. Tig subfamily.

It localises to the cytoplasm. It catalyses the reaction [protein]-peptidylproline (omega=180) = [protein]-peptidylproline (omega=0). Functionally, involved in protein export. Acts as a chaperone by maintaining the newly synthesized protein in an open conformation. Functions as a peptidyl-prolyl cis-trans isomerase. The sequence is that of Trigger factor from Alcanivorax borkumensis (strain ATCC 700651 / DSM 11573 / NCIMB 13689 / SK2).